The primary structure comprises 159 residues: 2-C-methyl-D-erythritol 2,4-cyclodiphosphate synthase (159 aa).

A divalent metal cation is bound by residues aspartate 8 and histidine 10. Residues 8 to 10 (DVH) and 34 to 35 (HS) each bind 4-CDP-2-C-methyl-D-erythritol 2-phosphate. An a divalent metal cation-binding site is contributed by histidine 42. Residues 56 to 58 (DIG), 61 to 65 (FPDTD), 100 to 106 (AQAPKML), 132 to 135 (TTTE), phenylalanine 139, and arginine 142 each bind 4-CDP-2-C-methyl-D-erythritol 2-phosphate.

Belongs to the IspF family. In terms of assembly, homotrimer. It depends on a divalent metal cation as a cofactor.

The catalysed reaction is 4-CDP-2-C-methyl-D-erythritol 2-phosphate = 2-C-methyl-D-erythritol 2,4-cyclic diphosphate + CMP. It functions in the pathway isoprenoid biosynthesis; isopentenyl diphosphate biosynthesis via DXP pathway; isopentenyl diphosphate from 1-deoxy-D-xylulose 5-phosphate: step 4/6. Involved in the biosynthesis of isopentenyl diphosphate (IPP) and dimethylallyl diphosphate (DMAPP), two major building blocks of isoprenoid compounds. Catalyzes the conversion of 4-diphosphocytidyl-2-C-methyl-D-erythritol 2-phosphate (CDP-ME2P) to 2-C-methyl-D-erythritol 2,4-cyclodiphosphate (ME-CPP) with a corresponding release of cytidine 5-monophosphate (CMP). The sequence is that of 2-C-methyl-D-erythritol 2,4-cyclodiphosphate synthase from Salmonella choleraesuis (strain SC-B67).